A 549-amino-acid chain; its full sequence is Cytochrome c oxidase subunit 1 (549 aa).

Residues 18–38 (LCYLLVAILSGFVGYVYSLFI) traverse the membrane as a helical segment. E41 and G46 together coordinate Ca(2+). Residues 42-62 (LSLIGCGILFGDYQFYNVLIT) traverse the membrane as a helical segment. H64 provides a ligand contact to Fe(II)-heme a. Transmembrane regions (helical) follow at residues 66-86 (LIMVFAFIMPVMMGGLVNYFI), 100-120 (LNNMSFWMYLAGFGCVVNGFL), 148-168 (FVMFAVHLLGISSILNSINLL), 186-206 (LFIWAALITAILLIITLPVLA), and 222-242 (FYDVVGGGDLILFQHIFWFFG). Residue H243 coordinates Cu cation. Positions 243–247 (HPEVY) form a cross-link, 1'-histidyl-3'-tyrosine (His-Tyr). The next 2 membrane-spanning stretches (helical) occupy residues 246 to 266 (VYIILLPVFGLISTIVEVIGF) and 269 to 289 (VFSTVAMIYSMILIAILGMFV). Y247 lines the O2 pocket. Cu cation contacts are provided by H292 and H293. 2 helical membrane passes run 306–326 (YFGGVSILIGLPTCVKLFNWI) and 340–360 (VYFVIMFIFMFLIGAVTGLFL). Mg(2+) is bound by residues H370 and D371. Heme a3 is bound at residue H378. Transmembrane regions (helical) follow at residues 379-399 (FHYVLSLGAVVGFFTGFIHFL), 402-422 (WLPIELYLFWMFYFISTLFIG), 460-480 (MLLLASLILFLCALFCVFLFW), 484-504 (LFFVSLFVFSLYCFFYFSTWL), and 520-540 (IVLDYLFLILCFCFVFFIFFW). Residue H380 coordinates Fe(II)-heme a.

The protein belongs to the heme-copper respiratory oxidase family. As to quaternary structure, component of the cytochrome c oxidase (complex IV, CIV), a multisubunit enzyme composed of a catalytic core of 3 subunits and several supernumerary subunits. The complex exists as a monomer or a dimer and forms supercomplexes (SCs) in the inner mitochondrial membrane with ubiquinol-cytochrome c oxidoreductase (cytochrome b-c1 complex, complex III, CIII). Heme is required as a cofactor. The cofactor is Cu cation.

It is found in the mitochondrion inner membrane. The enzyme catalyses 4 Fe(II)-[cytochrome c] + O2 + 8 H(+)(in) = 4 Fe(III)-[cytochrome c] + 2 H2O + 4 H(+)(out). The protein operates within energy metabolism; oxidative phosphorylation. Its function is as follows. Component of the cytochrome c oxidase, the last enzyme in the mitochondrial electron transport chain which drives oxidative phosphorylation. The respiratory chain contains 3 multisubunit complexes succinate dehydrogenase (complex II, CII), ubiquinol-cytochrome c oxidoreductase (cytochrome b-c1 complex, complex III, CIII) and cytochrome c oxidase (complex IV, CIV), that cooperate to transfer electrons derived from NADH and succinate to molecular oxygen, creating an electrochemical gradient over the inner membrane that drives transmembrane transport and the ATP synthase. Cytochrome c oxidase is the component of the respiratory chain that catalyzes the reduction of oxygen to water. Electrons originating from reduced cytochrome c in the intermembrane space (IMS) are transferred via the dinuclear copper A center (CU(A)) of subunit 2 and heme A of subunit 1 to the active site in subunit 1, a binuclear center (BNC) formed by heme A3 and copper B (CU(B)). The BNC reduces molecular oxygen to 2 water molecules using 4 electrons from cytochrome c in the IMS and 4 protons from the mitochondrial matrix. The chain is Cytochrome c oxidase subunit 1 (COI) from Leishmania tarentolae (Sauroleishmania tarentolae).